Reading from the N-terminus, the 244-residue chain is Uridylate kinase (244 aa).

17-20 (KVSG) contacts ATP. An involved in allosteric activation by GTP region spans residues 25 to 30 (GEKGFG). G59 is a binding site for UMP. ATP-binding residues include G60 and R64. UMP contacts are provided by residues D80 and 141–148 (VGNPFFTT). ATP is bound by residues T168, Q169, Y174, and D177.

It belongs to the UMP kinase family. As to quaternary structure, homohexamer.

It is found in the cytoplasm. It catalyses the reaction UMP + ATP = UDP + ADP. The protein operates within pyrimidine metabolism; CTP biosynthesis via de novo pathway; UDP from UMP (UMPK route): step 1/1. With respect to regulation, allosterically activated by GTP. Inhibited by UTP. Functionally, catalyzes the reversible phosphorylation of UMP to UDP. This chain is Uridylate kinase, found in Ehrlichia canis (strain Jake).